The sequence spans 198 residues: Thymidine kinase (198 aa).

ATP contacts are provided by residues 16-23 (GGMYSGKS) and 89-92 (EEGQ). E90 (proton acceptor) is an active-site residue. Zn(2+) is bound by residues C146, C149, C184, and C187.

Belongs to the thymidine kinase family. In terms of assembly, homotetramer.

It localises to the cytoplasm. The catalysed reaction is thymidine + ATP = dTMP + ADP + H(+). This is Thymidine kinase from Dictyoglomus thermophilum (strain ATCC 35947 / DSM 3960 / H-6-12).